We begin with the raw amino-acid sequence, 239 residues long: Eukaryotic translation initiation factor 6 (239 aa).

Belongs to the eIF-6 family. In terms of assembly, monomer. Associates with the 60S ribosomal subunit.

The protein localises to the cytoplasm. It is found in the nucleus. It localises to the nucleolus. In terms of biological role, binds to the 60S ribosomal subunit and prevents its association with the 40S ribosomal subunit to form the 80S initiation complex in the cytoplasm. May also be involved in ribosome biogenesis. The chain is Eukaryotic translation initiation factor 6 from Entamoeba dispar (strain ATCC PRA-260 / SAW760).